A 644-amino-acid chain; its full sequence is Protein cueball (644 aa).

An N-terminal signal peptide occupies residues M1 to G26. The Extracellular segment spans residues T27–S531. Residues N82 and N108 are each glycosylated (N-linked (GlcNAc...) asparagine). LDL-receptor class B repeat units follow at residues T121–R166, R167–S211, and D212–A257. 2 N-linked (GlcNAc...) asparagine glycosylation sites follow: N175 and N190. N313 is a glycosylation site (N-linked (GlcNAc...) asparagine). 2 consecutive EGF-like domains span residues E398–E430 and E433–E471. Disulfide bonds link C402-C411, C406-C421, C437-C447, C441-C459, and C461-C470. 2 N-linked (GlcNAc...) asparagine glycosylation sites follow: N473 and N508. A helical membrane pass occupies residues S532–V552. At H553–Y644 the chain is on the cytoplasmic side.

It belongs to the cueball family.

Its subcellular location is the cell membrane. Has a role in spermatogenesis and oogenesis. The sequence is that of Protein cueball from Drosophila yakuba (Fruit fly).